A 289-amino-acid chain; its full sequence is MPKFIAVKLIPKGPFRDIPRADTLFGAIGNAISAIHGQSAVEELVDAFVGGARISSAFPYSGDTYYLPKPLSVEPALEGILTGLDEEERYTTAKRLRKAKYLDLKNFELALRLRPFTIPEEIPYARVDVPRVVLDRVTQDSSIYFWEEIRFREKSGVYFLYSGPREVFDGYIAPAMRFLGDTGIGGKSTWGAGLFEVEFHEMKIDAPGSEYSVTLSNALPTKTPVLWRLLRKGGWSFGRRKPRMTFIAEGSIVKNDPGGMERLELGLSHEVYVYGLTFPLGVELPEGLE.

This sequence belongs to the CRISPR-associated Csm4 family. In terms of assembly, probably part of the Csm effector complex, that includes Cas10, Csm2, Csm3, Csm4, Csm5 and mature crRNA. Interacts with Cas10 (csm1).

CRISPR (clustered regularly interspaced short palindromic repeat) is an adaptive immune system that provides protection against mobile genetic elements (viruses, transposable elements and conjugative plasmids). CRISPR clusters contain spacers, sequences complementary to antecedent mobile elements, and target invading nucleic acids. CRISPR clusters are transcribed and processed into CRISPR RNA (crRNA). The type III-A Csm effector complex binds crRNA and acts as a crRNA-guided RNase, DNase and cyclic oligoadenylate synthase; binding of target RNA cognate to the crRNA is required for all activities. In terms of biological role, the subunit probably binds to the 5' handle of the crRNA, helping in discrimination between self- and non-self. The chain is CRISPR system Cms protein Csm4 from Thermococcus onnurineus (strain NA1).